The sequence spans 237 residues: NAD-dependent protein deacylase (237 aa).

The Deacetylase sirtuin-type domain occupies M1–L235. Position 8–28 (G8–W28) interacts with NAD(+). The substrate site is built by Y53 and R56. Position 86 to 89 (Q86 to D89) interacts with NAD(+). H104 functions as the Proton acceptor in the catalytic mechanism. Residues C112, C115, C138, and C140 each contribute to the Zn(2+) site. NAD(+) is bound by residues G177–S179, N203–E205, and A221.

It belongs to the sirtuin family. Class III subfamily. The cofactor is Zn(2+).

It is found in the cytoplasm. The catalysed reaction is N(6)-acetyl-L-lysyl-[protein] + NAD(+) + H2O = 2''-O-acetyl-ADP-D-ribose + nicotinamide + L-lysyl-[protein]. It catalyses the reaction N(6)-succinyl-L-lysyl-[protein] + NAD(+) + H2O = 2''-O-succinyl-ADP-D-ribose + nicotinamide + L-lysyl-[protein]. In terms of biological role, NAD-dependent lysine deacetylase and desuccinylase that specifically removes acetyl and succinyl groups on target proteins. Modulates the activities of several proteins which are inactive in their acylated form. The protein is NAD-dependent protein deacylase of Mycolicibacterium paratuberculosis (strain ATCC BAA-968 / K-10) (Mycobacterium paratuberculosis).